A 388-amino-acid polypeptide reads, in one-letter code: tRNA (guanine-N(7)-)-methyltransferase non-catalytic subunit (388 aa).

4 WD repeats span residues 58–102 (VEKR…KGDI), 112–151 (VVPKAPTAIVFDKEDAYVVVGDRAGDVHRFSVLNGSAIEM), 153–194 (GAIS…DSFF), and 196–234 (GHTEYVKTLAVQDNDSLWSSGGDKNLYNWSIAKCSAPRR). The disordered stretch occupies residues 365–388 (EKKKRRLNEDINGDDGEGPGPSNS).

This sequence belongs to the WD repeat TRM82 family. As to quaternary structure, forms a heterodimer with the catalytic subunit.

It localises to the nucleus. It functions in the pathway tRNA modification; N(7)-methylguanine-tRNA biosynthesis. Required for the formation of N(7)-methylguanine at position 46 (m7G46) in tRNA. In the complex, it is required to stabilize and induce conformational changes of the catalytic subunit. The polypeptide is tRNA (guanine-N(7)-)-methyltransferase non-catalytic subunit (Caenorhabditis elegans).